We begin with the raw amino-acid sequence, 537 residues long: 2-isopropylmalate synthase (537 aa).

One can recognise a Pyruvate carboxyltransferase domain in the interval 8-269 (VLIFDTTLRD…YFNGYLGRAE (262 aa)). Mn(2+) contacts are provided by D17, H208, H210, and N244. Residues 408-537 (QLAGVQVSCG…QRAPLPAPAL (130 aa)) are regulatory domain.

Belongs to the alpha-IPM synthase/homocitrate synthase family. LeuA type 1 subfamily. As to quaternary structure, homodimer. The cofactor is Mn(2+).

It is found in the cytoplasm. The catalysed reaction is 3-methyl-2-oxobutanoate + acetyl-CoA + H2O = (2S)-2-isopropylmalate + CoA + H(+). The protein operates within amino-acid biosynthesis; L-leucine biosynthesis; L-leucine from 3-methyl-2-oxobutanoate: step 1/4. In terms of biological role, catalyzes the condensation of the acetyl group of acetyl-CoA with 3-methyl-2-oxobutanoate (2-ketoisovalerate) to form 3-carboxy-3-hydroxy-4-methylpentanoate (2-isopropylmalate). This Synechococcus sp. (strain RCC307) protein is 2-isopropylmalate synthase.